The following is a 131-amino-acid chain: Large ribosomal subunit protein bL17 (131 aa).

This sequence belongs to the bacterial ribosomal protein bL17 family. As to quaternary structure, part of the 50S ribosomal subunit. Contacts protein L32.

This Thermotoga maritima (strain ATCC 43589 / DSM 3109 / JCM 10099 / NBRC 100826 / MSB8) protein is Large ribosomal subunit protein bL17.